Here is a 262-residue protein sequence, read N- to C-terminus: Acyl-[acyl-carrier-protein]--UDP-N-acetylglucosamine O-acyltransferase (262 aa).

Belongs to the transferase hexapeptide repeat family. LpxA subfamily. As to quaternary structure, homotrimer.

It localises to the cytoplasm. The catalysed reaction is a (3R)-hydroxyacyl-[ACP] + UDP-N-acetyl-alpha-D-glucosamine = a UDP-3-O-[(3R)-3-hydroxyacyl]-N-acetyl-alpha-D-glucosamine + holo-[ACP]. It functions in the pathway glycolipid biosynthesis; lipid IV(A) biosynthesis; lipid IV(A) from (3R)-3-hydroxytetradecanoyl-[acyl-carrier-protein] and UDP-N-acetyl-alpha-D-glucosamine: step 1/6. Involved in the biosynthesis of lipid A, a phosphorylated glycolipid that anchors the lipopolysaccharide to the outer membrane of the cell. The chain is Acyl-[acyl-carrier-protein]--UDP-N-acetylglucosamine O-acyltransferase from Erwinia tasmaniensis (strain DSM 17950 / CFBP 7177 / CIP 109463 / NCPPB 4357 / Et1/99).